Here is a 259-residue protein sequence, read N- to C-terminus: Protein N-terminal and lysine N-methyltransferase efm7 (259 aa).

S-adenosyl-L-methionine contacts are provided by residues Trp53, 80–82 (GAA), Asp102, Trp138, and Ala164.

It belongs to the class I-like SAM-binding methyltransferase superfamily. EFM7 family.

The protein localises to the cytoplasm. Functionally, S-adenosyl-L-methionine-dependent protein methyltransferase that trimethylates the N-terminal glycine 'Gly-2' of elongation factor 1-alpha, before also catalyzing the mono- and dimethylation of 'Lys-3'. This Emericella nidulans (strain FGSC A4 / ATCC 38163 / CBS 112.46 / NRRL 194 / M139) (Aspergillus nidulans) protein is Protein N-terminal and lysine N-methyltransferase efm7.